The chain runs to 521 residues: MDNDSQYSGYSYKSGHSRSSRKHRDRRERHRSKSREGSRGDKSVTIQAPGEPLLDNESTRGEDRDDNWGETTTVVTGTSEHSISHDDITRITKDMEDSAKLDCSRHLGVVIGGALALLSFLTPIAFMLLPQILWREDLEQCGTACEGLFISVAFKLLILLLGSWALFFRRPKAFFPRVFVFRALLMVLVFLLVVSYWLFYGVRILESRDKNYQGIVQYAVSLVDALLFVHYLAVVLLELRQLQPQFTVKVVRSTDGASRFYNIGHLSIQRVAVWILENYYHDFPVYNPALLNLPKSILSKKMSGFKVYSLGEENTTNNSTGQSRAVIAAAARRRDNSHNEYYYEEAEHERRVRKRKARLVVAVEEAFTHIKRLQDEDQKNPREIMDPREAAQAIFASMARAMQKYLRTTKQQPYHTMESILHHLEFCITHDMTPKAFLERYLGPGPTIQYHKDRWLAKQWTLVSEEPVTNGLKDGVVFVLKRQDFSLVVSTKKIPFFKLSEEFVDPKSHKFVMRLQSETSV.

The tract at residues 1–81 (MDNDSQYSGY…TTVVTGTSEH (81 aa)) is disordered. The Cytoplasmic segment spans residues 1 to 108 (MDNDSQYSGY…AKLDCSRHLG (108 aa)). Over residues 15-33 (GHSRSSRKHRDRRERHRSK) the composition is skewed to basic residues. A compositionally biased stretch (basic and acidic residues) spans 57-67 (ESTRGEDRDDN). The span at 69 to 81 (GETTTVVTGTSEH) shows a compositional bias: low complexity. Residues 109–129 (VVIGGALALLSFLTPIAFMLL) traverse the membrane as a helical segment. The Extracellular segment spans residues 130 to 147 (PQILWREDLEQCGTACEG). Residues 148-168 (LFISVAFKLLILLLGSWALFF) traverse the membrane as a helical segment. Residues 169-178 (RRPKAFFPRV) are Cytoplasmic-facing. A helical membrane pass occupies residues 179–199 (FVFRALLMVLVFLLVVSYWLF). Topologically, residues 200–218 (YGVRILESRDKNYQGIVQY) are extracellular. The helical transmembrane segment at 219–239 (AVSLVDALLFVHYLAVVLLEL) threads the bilayer. Over 240-521 (RQLQPQFTVK…VMRLQSETSV (282 aa)) the chain is Cytoplasmic. A PDZ-binding motif is present at residues 518–521 (ETSV).

This sequence belongs to the Vang family. Interacts with dvl/dsh. Interacts with prickle3.

The protein resides in the cell membrane. Has a role in non-canonical Wnt/planar cell polarity (PCP) signaling; can recruit dvl/dsh and prickle from the cytoplasm to the plasma membrane. Acts in a PCP complex to regulate the polarized assembly of fibronectrin on the surface of the mesoderm during gastrulation. Regulates convergent extension in both dorsal mesoderm and neural tissue without affecting cell fate. Regulates neural fold closure during neurulation. May be required for cell surface localization of fzd3 and fzd6 in the inner ear. The chain is Vang-like protein 2 from Xenopus tropicalis (Western clawed frog).